Here is a 620-residue protein sequence, read N- to C-terminus: Zinc finger protein GLIS1 (620 aa).

The segment at 108 to 132 (PLTGDLGGPSKRARPGPASTDSHEG) is disordered. The C2H2-type 1 zinc-finger motif lies at 195-220 (QACRWVDCCAAYEQQEELVRHIEKSH). The segment at 229–256 (FTCFWAGCVRRYKPFNARYKLLIHMRVH) adopts a C2H2-type 2; atypical zinc-finger fold. 3 C2H2-type zinc fingers span residues 262–286 (NKCM…LRSH), 292–316 (YLCQ…QRTH), and 322–346 (YACQ…VKAH). The Bipartite nuclear localization signal signature appears at 340 to 356 (RKHVKAHSAKEQQVRKK). Positions 414-515 (ASGLLPPAHD…PPLPSPQGYQ (102 aa)) are disordered. Residues 477–488 (SSQSHSPGGQPF) are compositionally biased toward low complexity. Residues 489–510 (PTLPSKPSYPPFQSPPPPPLPS) are compositionally biased toward pro residues.

It belongs to the GLI C2H2-type zinc-finger protein family. In terms of assembly, interacts with KLF4. Interacts with POU5F1 and/or POU5F1B. Interacts with SOX2.

The protein resides in the nucleus. Acts both as a repressor and an activator of transcription. Binds to the consensus sequence 5'-GACCACCCAC-3'. By controlling the expression of genes involved in cell differentiation inhibits the lineage commitment of multipotent cells. Prevents, for instance, the differentiation of multipotent mesenchymal cells into adipocyte and osteoblast. The protein is Zinc finger protein GLIS1 of Homo sapiens (Human).